Reading from the N-terminus, the 676-residue chain is Probable potassium transport system protein Kup (676 aa).

A run of 12 helical transmembrane segments spans residues 14–34 (GLLI…LYVM), 56–76 (ISLI…IIAL), 97–117 (AAWL…DGTL), 142–162 (VSNQ…LFSI), 173–193 (AFGP…LINI), 219–239 (AGFA…ALYS), 252–272 (SWPF…VWIL), 296–316 (LASI…LITG), 345–365 (IYIP…VLFF), 376–396 (GLSI…WLVL), 402–422 (LANL…MGSS), and 429–449 (GGYV…VWYF).

The protein belongs to the HAK/KUP transporter (TC 2.A.72) family.

Its subcellular location is the cell membrane. It catalyses the reaction K(+)(in) + H(+)(in) = K(+)(out) + H(+)(out). Its function is as follows. Transport of potassium into the cell. Likely operates as a K(+):H(+) symporter. In Lactobacillus delbrueckii subsp. bulgaricus (strain ATCC BAA-365 / Lb-18), this protein is Probable potassium transport system protein Kup.